The primary structure comprises 1102 residues: Phosphatidylinositol 4,5-bisphosphate 3-kinase catalytic subunit gamma isoform (1102 aa).

Positions 34 to 141 (SMELIPIEFV…PGQIHVVQRH (108 aa)) constitute a PI3K-ABD domain. A PI3K-RBD domain is found at 217–309 (NNCVFIVIHR…GEEIHLVLDT (93 aa)). Residues 357–521 (CDRKFRVKIR…NSMSISILLD (165 aa)) enclose the C2 PI3K-type domain. The PIK helical domain occupies 541-723 (DRVRAEMPNQ…AVILEAYLRG (183 aa)). The PI3K/PI4K catalytic domain occupies 797–1080 (VIEKCKVMAS…QIEVCRDKGW (284 aa)). Positions 803–809 (VMASKKK) are G-loop. ATP contacts are provided by residues 829–838 (GIIFKHGDDL) and 864–872 (LLPYGCIST). The segment at 943-951 (GIGDRHNDN) is catalytic loop. Residue 961-969 (FHIDFGHIL) coordinates ATP. An activation loop region spans residues 962–988 (HIDFGHILGNYKSFLGINKERVPFVLT). T1024 carries the phosphothreonine; by PKA modification. The residue at position 1101 (S1101) is a Phosphoserine; by autocatalysis.

This sequence belongs to the PI3/PI4-kinase family. In terms of assembly, heterodimer of a catalytic subunit PIK3CG and a PIK3R5 or PIK3R6 regulatory subunit. Interacts with GRK2 through the PIK helical domain. Interaction with GRK2 is required for targeting to agonist-occupied receptor. Interacts with PDE3B; regulates PDE3B activity and thereby cAMP levels in cells. Interacts with TPM2. Interacts with EPHA8; regulates integrin-mediated cell adhesion to substrate. Interacts with HRAS; the interaction is required for membrane recruitment and beta-gamma G protein dimer-dependent activation of the PI3K gamma complex PIK3CG:PIK3R6. Autophosphorylation at Ser-1101 has no effect on the phosphatidylinositol-4,5-bisphosphate 3-kinase activity.

The protein resides in the cytoplasm. It is found in the cell membrane. It carries out the reaction a 1,2-diacyl-sn-glycero-3-phospho-(1D-myo-inositol-4,5-bisphosphate) + ATP = a 1,2-diacyl-sn-glycero-3-phospho-(1D-myo-inositol-3,4,5-trisphosphate) + ADP + H(+). The catalysed reaction is a 1,2-diacyl-sn-glycero-3-phospho-(1D-myo-inositol) + ATP = a 1,2-diacyl-sn-glycero-3-phospho-(1D-myo-inositol-3-phosphate) + ADP + H(+). It catalyses the reaction a 1,2-diacyl-sn-glycero-3-phospho-(1D-myo-inositol 4-phosphate) + ATP = a 1,2-diacyl-sn-glycero-3-phospho-(1D-myo-inositol-3,4-bisphosphate) + ADP + H(+). The enzyme catalyses L-seryl-[protein] + ATP = O-phospho-L-seryl-[protein] + ADP + H(+). Its pathway is phospholipid metabolism; phosphatidylinositol phosphate biosynthesis. Its activity is regulated as follows. Activated by both the alpha and the beta-gamma G proteins following stimulation of G protein-coupled receptors (GPCRs). Activation by GPCRs is assisted by the regulatory subunits (PIK3R5 or PIK3R6) leading to the translocation from the cytosol to the plasma membrane and to kinase activation. When bound to PIK3R5 the PI3K activity of PIK3CG could be activated greater than 100-fold by the beta-gamma G proteins. In terms of biological role, phosphoinositide-3-kinase (PI3K) that phosphorylates PtdIns(4,5)P2 (Phosphatidylinositol 4,5-bisphosphate) to generate phosphatidylinositol 3,4,5-trisphosphate (PIP3). PIP3 plays a key role by recruiting PH domain-containing proteins to the membrane, including AKT1 and PDPK1, activating signaling cascades involved in cell growth, survival, proliferation, motility and morphology. Links G-protein coupled receptor activation to PIP3 production. Involved in immune, inflammatory and allergic responses. Modulates leukocyte chemotaxis to inflammatory sites and in response to chemoattractant agents. May control leukocyte polarization and migration by regulating the spatial accumulation of PIP3 and by regulating the organization of F-actin formation and integrin-based adhesion at the leading edge. Controls motility of dendritic cells. Participates in T-lymphocyte migration. Regulates T-lymphocyte proliferation and cytokine production. Required for B-lymphocyte development and signaling. Together with other PI3Ks are involved in the oxidative burst produced by neutrophils in response to chemotactic agents. Together with PIK3CD regulate neutrophil extravasation. Together with PIK3CB promotes platelet aggregation and thrombosis. Regulates alpha-IIb/beta-3 integrins (ITGA2B/ ITGB3) adhesive function in platelets downstream of P2Y12 through a lipid kinase activity-independent mechanism. May have also a lipid kinase activity-dependent function in platelet aggregation. Involved in endothelial progenitor cell migration. Negative regulator of cardiac contractility. Modulates cardiac contractility by anchoring protein kinase A (PKA) and PDE3B activation, reducing cAMP levels. Regulates cardiac contractility also by promoting beta-adrenergic receptor internalization by binding to GRK2 and by non-muscle tropomyosin phosphorylation. Also has serine/threonine protein kinase activity: both lipid and protein kinase activities are required for beta-adrenergic receptor endocytosis. May also have a scaffolding role in modulating cardiac contractility. Contribute to cardiac hypertrophy under pathological stress. Through simultaneous binding of PDE3B to RAPGEF3 and PIK3R6 is assembled in a signaling complex in which the PI3K gamma complex is activated by RAPGEF3 and which is involved in angiogenesis. In neutrophils, participates in a phospholipase C-activating N-formyl peptide-activated GPCR (G protein-coupled receptor) signaling pathway downstream of RASGRP4-mediated Ras-activation, to promote neutrophil functional responses. The sequence is that of Phosphatidylinositol 4,5-bisphosphate 3-kinase catalytic subunit gamma isoform (PIK3CG) from Sus scrofa (Pig).